The sequence spans 1213 residues: Probable ATP-binding protein BrxC (1213 aa).

Belongs to the BrxC family.

In terms of biological role, BREX systems (bacteriophage exclusion) provide immunity against bacteriophage. Part of a type 1 BREX system which protects against dsDNA phage. This system allows phage adsorption but prevents phage DNA replication, without degradation of the phage DNA. Methylation of bacterial DNA by PglX guides self/non-self discrimination. When the brxA-brxB-brxC-pglX-pglZ-brxL genes are transformed into a susceptible E.coli strain (BW25113) they confer very high resistance to infection by bacteriophage VR7 and VpaE1, about 100-fold protection against lambda, T5 and T7 and no protection against RNA phage Qbeta, ssDNA phage M13 or dSDNA phage T4 and VR5. Glycosylated phage DNA is not susceptible to BREX. The BREX system does not confer resistance to lysogenic lambda phage, i.e. prophage that are integrated into the chromosomal DNA and then induced to form phage. The polypeptide is Probable ATP-binding protein BrxC (Escherichia coli O9:H4 (strain HS)).